A 640-amino-acid polypeptide reads, in one-letter code: MKNKNSKQNTHSTIGEQDIHYFHEGKHIYAYEFMGAHKACEGGIEGIRFTTWAPNAKSICVIGDFNYWQVEDKNYMEPITDAGLWSVFIPNAKNGDKYKFVVTNKDTNHYVYKSDPYAFFSELRPNTASIITTETQYTWSDDKWLEKRAKTNYYDNPMNVYELHLASWKTKDGKFMTYDELSETLPQYIKEMGYTHVEFMPLHEHPLDASWGYQPTGFYSVNSRHGDIIGLKRLVDKLHNNDIGVILDWVPGHFCKDQHGLIYFDGTPCYEYQEHTKAINKGWGTHNFDLGRNEVKCFLISNAMYWINEFHIDGLRVDAVSNILYLNYDREDGQWIPNIYGGHENLEGIAFLKELNGVLKHTCKGVVTIAEESSSWPDISTPVEKGGLGFDFKWNMGWMNDTLRYISLDPVYRKYHHNLITFSMVYHYSEKFILSISHDEVVHGKKSLINKMWGDLWNKYAGLRLYMSYMIGHPGKKLIFMGSEFGQFVEWREYEQLQWQVVDQYESHKQTLHFFKKLNDFYHNETALWQCDYDHHGFRWIDADNSQQSILSFIRSSKDNKQKLIFICNFTPVTYYDYHLGVPDAGSYKEVFNSDNLEFGGSGQVMATEIFSSPQSSHGFEQRITIKIPPMATLVLKLIK.

The Nucleophile role is filled by Asp-318. Catalysis depends on Glu-371, which acts as the Proton donor.

The protein belongs to the glycosyl hydrolase 13 family. GlgB subfamily. In terms of assembly, monomer.

It catalyses the reaction Transfers a segment of a (1-&gt;4)-alpha-D-glucan chain to a primary hydroxy group in a similar glucan chain.. The protein operates within glycan biosynthesis; glycogen biosynthesis. Catalyzes the formation of the alpha-1,6-glucosidic linkages in glycogen by scission of a 1,4-alpha-linked oligosaccharide from growing alpha-1,4-glucan chains and the subsequent attachment of the oligosaccharide to the alpha-1,6 position. This is 1,4-alpha-glucan branching enzyme GlgB from Francisella tularensis subsp. novicida (strain U112).